We begin with the raw amino-acid sequence, 232 residues long: tRNA1(Val) (adenine(37)-N6)-methyltransferase (232 aa).

This sequence belongs to the methyltransferase superfamily. tRNA (adenine-N(6)-)-methyltransferase family.

The protein resides in the cytoplasm. The catalysed reaction is adenosine(37) in tRNA1(Val) + S-adenosyl-L-methionine = N(6)-methyladenosine(37) in tRNA1(Val) + S-adenosyl-L-homocysteine + H(+). In terms of biological role, specifically methylates the adenine in position 37 of tRNA(1)(Val) (anticodon cmo5UAC). The protein is tRNA1(Val) (adenine(37)-N6)-methyltransferase of Haemophilus influenzae (strain PittGG).